Reading from the N-terminus, the 501-residue chain is Glycerol kinase (501 aa).

Residue Thr-16 participates in ADP binding. ATP is bound by residues Thr-16, Thr-17, and Ser-18. Residue Thr-16 coordinates sn-glycerol 3-phosphate. An ADP-binding site is contributed by Arg-20. 4 residues coordinate sn-glycerol 3-phosphate: Arg-84, Glu-85, Tyr-135, and Asp-242. Residues Arg-84, Glu-85, Tyr-135, Asp-242, and Gln-243 each coordinate glycerol. The ADP site is built by Thr-264 and Gly-307. ATP is bound by residues Thr-264, Gly-307, Gln-311, and Gly-408. An ADP-binding site is contributed by Gly-408.

The protein belongs to the FGGY kinase family.

The catalysed reaction is glycerol + ATP = sn-glycerol 3-phosphate + ADP + H(+). It functions in the pathway polyol metabolism; glycerol degradation via glycerol kinase pathway; sn-glycerol 3-phosphate from glycerol: step 1/1. Key enzyme in the regulation of glycerol uptake and metabolism. Catalyzes the phosphorylation of glycerol to yield sn-glycerol 3-phosphate. The polypeptide is Glycerol kinase (Saccharolobus islandicus (strain M.16.27) (Sulfolobus islandicus)).